Reading from the N-terminus, the 396-residue chain is Beta-peptidyl aminopeptidase BapA (396 aa).

The signal sequence occupies residues 1-21 (MHYLKFPAIIAGMLLAGAASA). Catalysis depends on Ser271, which acts as the Nucleophile. Catalysis depends on proton donor/acceptor residues Ser309 and Asp311.

Belongs to the peptidase S58 family. Heterooctamer of 4 heterodimers ((alpha:beta)4); each heterodimer is composed of an alpha subunit and a beta subunit processed from the same precursor. In terms of processing, autoproteolytic processing to generate the alpha and beta subunit is required for self-activation and is proposed to use a similar mechanism as substrate cleavage.

It is found in the periplasm. The enzyme catalyses Cleaves N-terminal beta-homoamino acids from peptides composed of 2 to 6 amino acids.. Inhibited by AEBSF (4-(2-aminoethyl)benzenesulfonyl fluoride, Pefabloc SC). In terms of biological role, beta-aminopeptidase that can cleave synthetic beta-peptides which consist of backbone-elongated beta-amino acid residues that are not processed by common proteolytic enzymes. Can cleave the beta-peptides beta-homoVal-beta-homoAla-beta-homoLeu and beta-homoAla-beta-homoLeu. Requires a beta-amino acid at the N-terminus of peptide substrates and cleaves the peptide bond between the N-terminal beta-amino acid and the amino acid at the second position of tripeptidic substrates of the general structure H-betahXaa-Ile-betahTyr-OH according to the following preferences with regard to the side chain of the N-terminal beta-amino acid: aliphatic and aromatic &gt; OH-containing &gt; hydrogen, basic and polar. beta-homoVal-beta-homoAla-beta-homoLeu and beta-homoAla-beta-homoLeu. The protein is Beta-peptidyl aminopeptidase BapA of Sphingosinicella microcystinivorans.